The chain runs to 465 residues: MASMSTVFPKPTSFISQPLTKSHKSDSVTTSISFPSNSKTRSLRTISVRAGLIEPDGGKLVDLVVPEPRRREKKHEAADLPRVRLTAIDLQWMHVLSEGWASPLRGFMRESEFLQTLHFNLLNLDDGSVVNMSVPIVLAIDDQQKALIGESKRVSLVDSDDNPIAILNDIEIYKHPKEERIARTWGTTAPGLPYVEEAITNAGDWLIGGDLEVLEPVKYNDGLDRFRLSPFELRKELEKRGADAVFAFQLRNPVHNGHALLMTDTRRRLLEMGYKNPILLLHPLGGFTKADDVPLSWRMKQHEKVLEDGVLDPETTVVSIFPSPMLYAGPTEVQWHAKARINAGANFYIVGRDPAGMGHPVEKRDLYDADHGKKVLSMAPGLERLNILPFRVAAYDKTQGKMAFFDPSRAQDFLFISGTKMRALAKNRENPPDGFMCPGGWKVLVDYYDSLTLTGNTKLPEKIPV.

A chloroplast-targeting transit peptide spans methionine 1 to arginine 49.

It belongs to the sulfate adenylyltransferase family. In terms of assembly, homotetramer.

It localises to the plastid. The protein localises to the chloroplast stroma. It carries out the reaction sulfate + ATP + H(+) = adenosine 5'-phosphosulfate + diphosphate. The protein operates within sulfur metabolism; hydrogen sulfide biosynthesis; sulfite from sulfate: step 1/3. The sequence is that of ATP-sulfurylase 3, chloroplastic (APS3) from Arabidopsis thaliana (Mouse-ear cress).